A 429-amino-acid chain; its full sequence is Bifunctional protein GlmU (429 aa).

Positions 1–223 are pyrophosphorylase; it reads MKTSILILAA…EDEFMGINDK (223 aa). Residues 8-11, Lys-22, and 81-82 each bind UDP-N-acetyl-alpha-D-glucosamine; these read LAAG and GT. Mg(2+) is bound at residue Asp-102. UDP-N-acetyl-alpha-D-glucosamine contacts are provided by Gly-135, Glu-149, Asn-164, and Asn-221. Asn-221 serves as a coordination point for Mg(2+). Residues 224 to 244 are linker; the sequence is FELSIAENFMQEKIKKYWMQQ. The interval 245 to 429 is N-acetyltransferase; it reads GVIFHLPQST…KDYYYKKFQK (185 aa). UDP-N-acetyl-alpha-D-glucosamine contacts are provided by Arg-308 and Lys-325. The Proton acceptor role is filled by His-336. 2 residues coordinate UDP-N-acetyl-alpha-D-glucosamine: Tyr-339 and Asn-350. Acetyl-CoA-binding positions include 359-360, Ser-378, Ala-396, and Arg-413; that span reads NY.

This sequence in the N-terminal section; belongs to the N-acetylglucosamine-1-phosphate uridyltransferase family. It in the C-terminal section; belongs to the transferase hexapeptide repeat family. In terms of assembly, homotrimer. The cofactor is Mg(2+).

The protein resides in the cytoplasm. The enzyme catalyses alpha-D-glucosamine 1-phosphate + acetyl-CoA = N-acetyl-alpha-D-glucosamine 1-phosphate + CoA + H(+). The catalysed reaction is N-acetyl-alpha-D-glucosamine 1-phosphate + UTP + H(+) = UDP-N-acetyl-alpha-D-glucosamine + diphosphate. It participates in nucleotide-sugar biosynthesis; UDP-N-acetyl-alpha-D-glucosamine biosynthesis; N-acetyl-alpha-D-glucosamine 1-phosphate from alpha-D-glucosamine 6-phosphate (route II): step 2/2. The protein operates within nucleotide-sugar biosynthesis; UDP-N-acetyl-alpha-D-glucosamine biosynthesis; UDP-N-acetyl-alpha-D-glucosamine from N-acetyl-alpha-D-glucosamine 1-phosphate: step 1/1. It functions in the pathway bacterial outer membrane biogenesis; LPS lipid A biosynthesis. Catalyzes the last two sequential reactions in the de novo biosynthetic pathway for UDP-N-acetylglucosamine (UDP-GlcNAc). The C-terminal domain catalyzes the transfer of acetyl group from acetyl coenzyme A to glucosamine-1-phosphate (GlcN-1-P) to produce N-acetylglucosamine-1-phosphate (GlcNAc-1-P), which is converted into UDP-GlcNAc by the transfer of uridine 5-monophosphate (from uridine 5-triphosphate), a reaction catalyzed by the N-terminal domain. The protein is Bifunctional protein GlmU of Campylobacter jejuni subsp. jejuni serotype O:23/36 (strain 81-176).